The chain runs to 631 residues: Chaperone protein DnaK (631 aa).

At Thr198 the chain carries Phosphothreonine; by autocatalysis. Positions 602-631 (EAAGGAQQAGKDDVVDAEFTEVDDDKKKSA) are disordered.

This sequence belongs to the heat shock protein 70 family.

Its function is as follows. Acts as a chaperone. In Rhodopseudomonas palustris (strain ATCC BAA-98 / CGA009), this protein is Chaperone protein DnaK.